Reading from the N-terminus, the 286-residue chain is Deaminated glutathione amidase (286 aa).

The 249-residue stretch at 4 to 252 folds into the CN hydrolase domain; the sequence is ANVALLQLCS…VSALKVKIET (249 aa). The active-site Proton acceptor is the Glu-42. Lys-115 is an active-site residue. Catalysis depends on Cys-157, which acts as the Nucleophile.

The protein belongs to the carbon-nitrogen hydrolase superfamily. NIT1/NIT2 family.

It catalyses the reaction N-(4-oxoglutaryl)-L-cysteinylglycine + H2O = L-cysteinylglycine + 2-oxoglutarate. Its function is as follows. Hydrolyzes deaminated glutathione (dGSH, 2-oxoglutaramate) to alpha-ketoglutarate (alpha-KG) and cysteinylglycine (specific activity 6.50 umol/min/mg), has less activity against alpha-ketoglutaramate (a-KGM, specific activity 0.20 umol/min/mg), very little activity on glutathione and none on L-glutamine. May function as a metabolite repair enzyme. The chain is Deaminated glutathione amidase from Yersinia enterocolitica.